Reading from the N-terminus, the 226-residue chain is ATP synthase F(0) complex subunit a (226 aa).

6 helical membrane-spanning segments follow: residues 12-32 (PTVL…LLIP), 68-88 (WSLM…LGLL), 97-117 (QLSM…AMGL), 138-158 (IPML…ALAV), 182-202 (LAIN…LTIL), and 203-223 (ETAI…LYLH).

The protein belongs to the ATPase A chain family. In terms of assembly, component of the ATP synthase complex composed at least of ATP5F1A/subunit alpha, ATP5F1B/subunit beta, ATP5MC1/subunit c (homooctomer), MT-ATP6/subunit a, MT-ATP8/subunit 8, ATP5ME/subunit e, ATP5MF/subunit f, ATP5MG/subunit g, ATP5MK/subunit k, ATP5MJ/subunit j, ATP5F1C/subunit gamma, ATP5F1D/subunit delta, ATP5F1E/subunit epsilon, ATP5PF/subunit F6, ATP5PB/subunit b, ATP5PD/subunit d, ATP5PO/subunit OSCP. ATP synthase complex consists of a soluble F(1) head domain (subunits alpha(3) and beta(3)) - the catalytic core - and a membrane F(0) domain - the membrane proton channel (subunits c, a, 8, e, f, g, k and j). These two domains are linked by a central stalk (subunits gamma, delta, and epsilon) rotating inside the F1 region and a stationary peripheral stalk (subunits F6, b, d, and OSCP). Interacts with DNAJC30; interaction is direct.

It localises to the mitochondrion inner membrane. It carries out the reaction H(+)(in) = H(+)(out). Its function is as follows. Subunit a, of the mitochondrial membrane ATP synthase complex (F(1)F(0) ATP synthase or Complex V) that produces ATP from ADP in the presence of a proton gradient across the membrane which is generated by electron transport complexes of the respiratory chain. ATP synthase complex consist of a soluble F(1) head domain - the catalytic core - and a membrane F(1) domain - the membrane proton channel. These two domains are linked by a central stalk rotating inside the F(1) region and a stationary peripheral stalk. During catalysis, ATP synthesis in the catalytic domain of F(1) is coupled via a rotary mechanism of the central stalk subunits to proton translocation. With the subunit c (ATP5MC1), forms the proton-conducting channel in the F(0) domain, that contains two crucial half-channels (inlet and outlet) that facilitate proton movement from the mitochondrial intermembrane space (IMS) into the matrix. Protons are taken up via the inlet half-channel and released through the outlet half-channel, following a Grotthuss mechanism. In Pongo abelii (Sumatran orangutan), this protein is ATP synthase F(0) complex subunit a.